The primary structure comprises 265 residues: tRNA pseudouridine synthase A (265 aa).

Asp-53 serves as the catalytic Nucleophile. Residue Tyr-111 coordinates substrate.

This sequence belongs to the tRNA pseudouridine synthase TruA family. As to quaternary structure, homodimer.

It catalyses the reaction uridine(38/39/40) in tRNA = pseudouridine(38/39/40) in tRNA. Functionally, formation of pseudouridine at positions 38, 39 and 40 in the anticodon stem and loop of transfer RNAs. The protein is tRNA pseudouridine synthase A of Acinetobacter baumannii (strain SDF).